Reading from the N-terminus, the 208-residue chain is Methionine-R-sulfoxide reductase B1 (208 aa).

The segment covering Gln-27–Tyr-36 has biased composition (basic and acidic residues). The interval Gln-27–Glu-48 is disordered. A MsrB domain is found at Lys-54–Ala-188. Zn(2+) contacts are provided by Cys-93, Cys-96, Cys-154, and Cys-157. An intrachain disulfide couples Cys-111 to Cys-177. Cys-177 (nucleophile) is an active-site residue. Positions Asp-189 to Gln-208 are disordered.

Belongs to the MsrB Met sulfoxide reductase family. Requires Zn(2+) as cofactor. Present in the embryonic nervous system (brain and cord) in neuronal cell bodies, along axons. Also present in embryonic muscles in motor axons. Localizes to growing bristle tips where it is distributed in small puntae. Present at and at sites of actin localization.

The protein localises to the cytoplasm. The protein resides in the nucleus. It is found in the cytoskeleton. The enzyme catalyses L-methionyl-[protein] + [thioredoxin]-disulfide + H2O = L-methionyl-(R)-S-oxide-[protein] + [thioredoxin]-dithiol. In terms of biological role, methionine-sulfoxide reductase that specifically reduces methionine (R)-sulfoxide back to methionine. While in many cases methionine oxidation is the result of random oxidation following oxidative stress, methionine oxidation is also a post-translational modification that takes place on specific residues. Acts as a regulator of actin assembly by reducing methionine (R)-sulfoxide mediated by Mical on actin thereby promoting filament repolymerization. This chain is Methionine-R-sulfoxide reductase B1 (SelR), found in Drosophila melanogaster (Fruit fly).